We begin with the raw amino-acid sequence, 295 residues long: Malonyl-[acyl-carrier protein] O-methyltransferase (295 aa).

This sequence belongs to the methyltransferase superfamily.

It carries out the reaction malonyl-[ACP] + S-adenosyl-L-methionine = malonyl-[ACP] methyl ester + S-adenosyl-L-homocysteine. Its pathway is cofactor biosynthesis; biotin biosynthesis. Its function is as follows. Converts the free carboxyl group of a malonyl-thioester to its methyl ester by transfer of a methyl group from S-adenosyl-L-methionine (SAM). It allows to synthesize pimeloyl-ACP via the fatty acid synthetic pathway. This Halorhodospira halophila (strain DSM 244 / SL1) (Ectothiorhodospira halophila (strain DSM 244 / SL1)) protein is Malonyl-[acyl-carrier protein] O-methyltransferase.